The following is a 74-amino-acid chain: uncharacterized protein (74 aa).

This is an uncharacterized protein from Saccharomyces cerevisiae (strain ATCC 204508 / S288c) (Baker's yeast).